The primary structure comprises 331 residues: Probable mannose-1-phosphate guanylyltransferase 3 (331 aa).

Lysine 3 is a diphosphate binding site. 5 residues coordinate GDP-alpha-D-mannose: glycine 66, asparagine 90, aspartate 92, glycine 127, and asparagine 154.

Belongs to the transferase hexapeptide repeat family.

It catalyses the reaction alpha-D-mannose 1-phosphate + GTP + H(+) = GDP-alpha-D-mannose + diphosphate. It functions in the pathway nucleotide-sugar biosynthesis; GDP-alpha-D-mannose biosynthesis; GDP-alpha-D-mannose from alpha-D-mannose 1-phosphate (GTP route): step 1/1. Catalyzes a reaction of the Smirnoff-Wheeler pathway, the major route to ascorbate biosynthesis in plants. The protein is Probable mannose-1-phosphate guanylyltransferase 3 of Arabidopsis thaliana (Mouse-ear cress).